We begin with the raw amino-acid sequence, 496 residues long: Maturase K (496 aa).

This sequence belongs to the intron maturase 2 family. MatK subfamily.

It is found in the plastid. It localises to the chloroplast. Its function is as follows. Usually encoded in the trnK tRNA gene intron. Probably assists in splicing its own and other chloroplast group II introns. In Paeonia suffruticosa (Tree peony), this protein is Maturase K.